The sequence spans 452 residues: UPF0210 protein CHY_1509 (452 aa).

Belongs to the UPF0210 family. In terms of assembly, homodimer.

The polypeptide is UPF0210 protein CHY_1509 (Carboxydothermus hydrogenoformans (strain ATCC BAA-161 / DSM 6008 / Z-2901)).